Reading from the N-terminus, the 226-residue chain is PKHD-type hydroxylase PputW619_4316 (226 aa).

The Fe2OG dioxygenase domain occupies 78-178 (KVFPPLINCY…RYAAFFWTQS (101 aa)). Residues histidine 96, aspartate 98, and histidine 159 each coordinate Fe cation. Residue arginine 169 participates in 2-oxoglutarate binding.

Fe(2+) is required as a cofactor. The cofactor is L-ascorbate.

In Pseudomonas putida (strain W619), this protein is PKHD-type hydroxylase PputW619_4316.